An 824-amino-acid polypeptide reads, in one-letter code: Lon protease (824 aa).

A disordered region spans residues 1–23; sequence MNEPMSLFDDLPEEHDEPQEAPE. The segment covering 10-20 has biased composition (acidic residues); sequence DLPEEHDEPQE. The Lon N-terminal domain maps to 26–222; that stretch reads LPMVVLGEMV…KVYLVLARQL (197 aa). 375 to 382 contributes to the ATP binding site; the sequence is GPPGVGKT. The region spanning 617 to 798 is the Lon proteolytic domain; sequence QDEVGVATGV…DEVLRIALSR (182 aa). Active-site residues include Ser704 and Lys747. A disordered region spans residues 800 to 824; the sequence is PTPANNQNGSHTNNRGQPSPAPAGT. Residues 802 to 816 show a composition bias toward polar residues; it reads PANNQNGSHTNNRGQ.

This sequence belongs to the peptidase S16 family. Homohexamer. Organized in a ring with a central cavity.

It is found in the cytoplasm. It catalyses the reaction Hydrolysis of proteins in presence of ATP.. Functionally, ATP-dependent serine protease that mediates the selective degradation of mutant and abnormal proteins as well as certain short-lived regulatory proteins. Required for cellular homeostasis and for survival from DNA damage and developmental changes induced by stress. Degrades polypeptides processively to yield small peptide fragments that are 5 to 10 amino acids long. Binds to DNA in a double-stranded, site-specific manner. The sequence is that of Lon protease from Chloroflexus aggregans (strain MD-66 / DSM 9485).